The primary structure comprises 315 residues: Ninja-family protein 1 (315 aa).

3 disordered regions span residues 1 to 28 (MASRDFLGRFGGEKGAASDKAGGGAGEA), 68 to 142 (SLPG…AQEP), and 156 to 237 (DQGN…TGDL). The segment covering 99 to 108 (ERWRRREMQS) has biased composition (basic and acidic residues). Positions 156-166 (DQGNPSSSMPE) are enriched in polar residues. Composition is skewed to low complexity over residues 184 to 197 (SSDNNNNASNQNKS) and 221 to 234 (LRTLRSLTMRTTST).

Belongs to the Ninja family.

The protein resides in the nucleus. In Triticum aestivum (Wheat), this protein is Ninja-family protein 1 (AFP-A1).